Here is a 618-residue protein sequence, read N- to C-terminus: MNLLDKLNFPEDLKKLNEEDYKVLSSEIRKFLIDSVSKTGGHLASNLGVVELTLSLFKAFSFDKDKIVWDVGHQSYIYKILTGRKEGFKKLRKYDGISGFPKRNESKYDYFDTGHSSTSISAALGIARARDLKKEKYNVISVIGDGALTGGMAIEALNDVGFRKTKLIIILNDNQMSISTNVGGLSRYLNKLRIAPVYNKLKTDIHASLDNSNLGKNIAGKISKVKDSIKQLIVPSMFFENMGVKYIGPIDGHDIDAMTEVFIKAKEINEPVIIHILTQKGKGYALAEESPSKYHAVGAFNLESGESNASPKNSYSKAFGKALVNLGAQDEKIVAITAAMPEGTGLKCFSQKFRDRFFDVGIAEEHAVTLAAGMASNGLKPVFAVYSTFLQRAFDQVLHDVCIQNLPVVFAIDRAGIVGEDGETHQGINDLSYLSMIPNIHIVVPKCLEEVDVLLKWAINKNAPVAIRYPKGGNIIDTLSPIKEVVEGQWEIVNRGSKVCIIATGRMVQHAMIAKEFLYEKGLNPTVINATFVKPIDKKLLENIKKEGYNILTIEDNIIKGGLGSAVKDYLSEIDYKGTIRSLGYDDEFIPQGNVEILYKTYKLDYENISKIVMKLYD.

Residues His-73 and 114–116 each bind thiamine diphosphate; that span reads GHS. Asp-145 provides a ligand contact to Mg(2+). Thiamine diphosphate is bound by residues 146-147, Asn-174, Tyr-284, and Glu-364; that span reads GA. Asn-174 lines the Mg(2+) pocket.

The protein belongs to the transketolase family. DXPS subfamily. Homodimer. The cofactor is Mg(2+). Requires thiamine diphosphate as cofactor.

The catalysed reaction is D-glyceraldehyde 3-phosphate + pyruvate + H(+) = 1-deoxy-D-xylulose 5-phosphate + CO2. It participates in metabolic intermediate biosynthesis; 1-deoxy-D-xylulose 5-phosphate biosynthesis; 1-deoxy-D-xylulose 5-phosphate from D-glyceraldehyde 3-phosphate and pyruvate: step 1/1. Catalyzes the acyloin condensation reaction between C atoms 2 and 3 of pyruvate and glyceraldehyde 3-phosphate to yield 1-deoxy-D-xylulose-5-phosphate (DXP). In Clostridium beijerinckii (strain ATCC 51743 / NCIMB 8052) (Clostridium acetobutylicum), this protein is 1-deoxy-D-xylulose-5-phosphate synthase.